The sequence spans 348 residues: MTVRIAINGFGRIGRNVLRALYETGRRAEISAVAINELADAAGMAHLLKYDTSHGRFAWDVRQERDLLTVGDDTIRLLHIPEIGSLPWRELNVDIVLDCTGVYGSRADGEAHLKAGARKVLFSHPGGHDLDATVVYGVNEKELLPEHLLVSNASCTTNCIIPIIKLLDDAWGIESGTVTTIHSAMHDQQVIDAYHPDLRRTRAASQSIIPVDTRLAAGITRIFPKFNDRFEAIAVRVPTINVTAIDLSVSVRDAVKASEVNALLHSASLGAFSGIVDYTELPLVSIDFNHDPHSAIVDGTQTRVSGQHLIKTLVWCDNEWGFANRMIDTTLAMAASGFSLDAAASIKL.

12-13 provides a ligand contact to NAD(+); that stretch reads RI. Substrate-binding positions include 154–156, Arg-200, 213–214, and Arg-236; these read SCT and TR. Catalysis depends on Cys-155, which acts as the Nucleophile. Asn-318 is an NAD(+) binding site.

This sequence belongs to the glyceraldehyde-3-phosphate dehydrogenase family. Epd subfamily. Homotetramer.

The protein resides in the cytoplasm. It carries out the reaction D-erythrose 4-phosphate + NAD(+) + H2O = 4-phospho-D-erythronate + NADH + 2 H(+). It functions in the pathway cofactor biosynthesis; pyridoxine 5'-phosphate biosynthesis; pyridoxine 5'-phosphate from D-erythrose 4-phosphate: step 1/5. Functionally, catalyzes the NAD-dependent conversion of D-erythrose 4-phosphate to 4-phosphoerythronate. In Erwinia tasmaniensis (strain DSM 17950 / CFBP 7177 / CIP 109463 / NCPPB 4357 / Et1/99), this protein is D-erythrose-4-phosphate dehydrogenase.